The sequence spans 402 residues: MAT+ sexual cell fertilization-promoting factor (402 aa).

The segment at residues 169 to 237 is a DNA-binding region (HMG box); it reads IPRPPNAYIL…KLMSAHPHYR (69 aa). Residues 246–272 form a disordered region; sequence IRRRAPRRNRAQEVANASPIGENSGAP.

It localises to the nucleus. Controls fertilization, probably by determining the mating type. In Podospora anserina (Pleurage anserina), this protein is MAT+ sexual cell fertilization-promoting factor (FPR1).